Consider the following 194-residue polypeptide: Fe/S biogenesis protein NfuA (194 aa).

The [4Fe-4S] cluster site is built by C152 and C155.

It belongs to the NfuA family. As to quaternary structure, homodimer. [4Fe-4S] cluster is required as a cofactor.

Its function is as follows. Involved in iron-sulfur cluster biogenesis. Binds a 4Fe-4S cluster, can transfer this cluster to apoproteins, and thereby intervenes in the maturation of Fe/S proteins. Could also act as a scaffold/chaperone for damaged Fe/S proteins. In Teredinibacter turnerae (strain ATCC 39867 / T7901), this protein is Fe/S biogenesis protein NfuA.